A 157-amino-acid chain; its full sequence is Ribosome-binding factor A (157 aa).

The interval 126-157 (RARATAQYAGDADPYKHDDEPSDDFEDDSDEE) is disordered. Over residues 145-157 (EPSDDFEDDSDEE) the composition is skewed to acidic residues.

This sequence belongs to the RbfA family. As to quaternary structure, monomer. Binds 30S ribosomal subunits, but not 50S ribosomal subunits or 70S ribosomes.

Its subcellular location is the cytoplasm. Functionally, one of several proteins that assist in the late maturation steps of the functional core of the 30S ribosomal subunit. Associates with free 30S ribosomal subunits (but not with 30S subunits that are part of 70S ribosomes or polysomes). Required for efficient processing of 16S rRNA. May interact with the 5'-terminal helix region of 16S rRNA. This Bifidobacterium longum (strain DJO10A) protein is Ribosome-binding factor A.